Consider the following 213-residue polypeptide: Histone H1.2 (213 aa).

Residues 1 to 17 are compositionally biased toward low complexity; sequence MSETAPAAPAAAPPAEK. The segment at 1–41 is disordered; it reads MSETAPAAPAAAPPAEKTPVKKKAAKKPAGARRKASGPPVS. The residue at position 2 (Ser2) is an N-acetylserine; partial. The residue at position 2 (Ser2) is a Phosphoserine. Lys17 carries the post-translational modification N6-acetyllysine. The segment covering 20-35 has biased composition (basic residues); the sequence is VKKKAAKKPAGARRKA. 3 positions are modified to N6-(2-hydroxyisobutyryl)lysine: Lys23, Lys26, and Lys27. N6-(beta-hydroxybutyryl)lysine; alternate is present on Lys34. The residue at position 34 (Lys34) is an N6-crotonyllysine; alternate. Lys34 bears the N6-methyllysine; alternate mark. Positions 36–109 constitute an H15 domain; it reads SGPPVSELIT…GASGSFKLNK (74 aa). Position 46 is an N6-(2-hydroxyisobutyryl)lysine (Lys46). Lys52 bears the N6-(beta-hydroxybutyryl)lysine; alternate mark. Position 52 is an N6-(2-hydroxyisobutyryl)lysine; alternate (Lys52). Arg54 carries the post-translational modification Citrulline. Lys63 carries the post-translational modification N6-(2-hydroxyisobutyryl)lysine. Lys64 is subject to N6-(beta-hydroxybutyryl)lysine; alternate. At Lys64 the chain carries N6-crotonyllysine; alternate. The residue at position 64 (Lys64) is an N6-(2-hydroxyisobutyryl)lysine; alternate. Lys75 and Lys81 each carry N6-(2-hydroxyisobutyryl)lysine. 2 positions are modified to N6-(beta-hydroxybutyryl)lysine; alternate: Lys85 and Lys90. N6-crotonyllysine; alternate occurs at positions 85, 90, and 97. N6-(2-hydroxyisobutyryl)lysine; alternate occurs at positions 85, 90, and 97. The tract at residues 95–213 is disordered; the sequence is QTKGTGASGS…KPKKAAPKKK (119 aa). Lys97 is subject to N6-succinyllysine; alternate. Ser104 is subject to Phosphoserine; by PKC. Lys106 carries the N6-(beta-hydroxybutyryl)lysine modification. Residues Lys110, Lys117, Lys121, Lys129, and Lys136 each carry the N6-(2-hydroxyisobutyryl)lysine modification. The span at 119 to 140 shows a compositional bias: basic residues; the sequence is KAKKAGAAKPKKAAGAAKKTKK. Thr146 carries the post-translational modification Phosphothreonine. At Lys148 the chain carries N6-(2-hydroxyisobutyryl)lysine. Residues 149–160 are compositionally biased toward basic residues; sequence KTAKKTPKKAKK. N6-crotonyllysine; alternate occurs at positions 159 and 168. N6-(2-hydroxyisobutyryl)lysine; alternate is present on residues Lys159 and Lys168. Basic residues predominate over residues 169-186; that stretch reads KVAKSPKKAKAAKPKKAA. Lys187 is subject to N6-methyllysine; by EHMT1 and EHMT2. Ser188 carries the ADP-ribosylserine modification. The span at 193-213 shows a compositional bias: basic residues; the sequence is VKPKAAKPKVAKPKKAAPKKK.

The protein belongs to the histone H1/H5 family. Post-translationally, H1 histones are progressively phosphorylated during the cell cycle, becoming maximally phosphorylated during late G2 phase and M phase, and being dephosphorylated sharply thereafter. Crotonylation (Kcr) is specifically present in male germ cells and marks testis-specific genes in post-meiotic cells, including X-linked genes that escape sex chromosome inactivation in haploid cells. Crotonylation marks active promoters and enhancers and confers resistance to transcriptional repressors. It is also associated with post-meiotically activated genes on autosomes. In terms of processing, ADP-ribosylated on Ser-188 in response to DNA damage. Post-translationally, citrullination at Arg-54 (H1R54ci) by PADI4 takes place within the DNA-binding site of H1 and results in its displacement from chromatin and global chromatin decondensation, thereby promoting pluripotency and stem cell maintenance.

Its subcellular location is the nucleus. The protein resides in the chromosome. Functionally, histone H1 protein binds to linker DNA between nucleosomes forming the macromolecular structure known as the chromatin fiber. Histones H1 are necessary for the condensation of nucleosome chains into higher-order structured fibers. Also acts as a regulator of individual gene transcription through chromatin remodeling, nucleosome spacing and DNA methylation. In Bos taurus (Bovine), this protein is Histone H1.2.